The following is a 121-amino-acid chain: Large ribosomal subunit protein bL12 (121 aa).

This sequence belongs to the bacterial ribosomal protein bL12 family. Homodimer. Part of the ribosomal stalk of the 50S ribosomal subunit. Forms a multimeric L10(L12)X complex, where L10 forms an elongated spine to which 2 to 4 L12 dimers bind in a sequential fashion. Binds GTP-bound translation factors.

Functionally, forms part of the ribosomal stalk which helps the ribosome interact with GTP-bound translation factors. Is thus essential for accurate translation. This Shewanella pealeana (strain ATCC 700345 / ANG-SQ1) protein is Large ribosomal subunit protein bL12.